Here is a 317-residue protein sequence, read N- to C-terminus: Beta-ketoacyl-[acyl-carrier-protein] synthase III (317 aa).

Active-site residues include C112 and H244. Residues Q245–R249 form an ACP-binding region. N274 is a catalytic residue.

This sequence belongs to the thiolase-like superfamily. FabH family. Homodimer.

It is found in the cytoplasm. It carries out the reaction malonyl-[ACP] + acetyl-CoA + H(+) = 3-oxobutanoyl-[ACP] + CO2 + CoA. Its pathway is lipid metabolism; fatty acid biosynthesis. Catalyzes the condensation reaction of fatty acid synthesis by the addition to an acyl acceptor of two carbons from malonyl-ACP. Catalyzes the first condensation reaction which initiates fatty acid synthesis and may therefore play a role in governing the total rate of fatty acid production. Possesses both acetoacetyl-ACP synthase and acetyl transacylase activities. Its substrate specificity determines the biosynthesis of branched-chain and/or straight-chain of fatty acids. The protein is Beta-ketoacyl-[acyl-carrier-protein] synthase III of Shigella boydii serotype 4 (strain Sb227).